The sequence spans 316 residues: MASLKSLFLLFLFFFTAQSRLTTNFYSKTCPRFLDIIRDTITNKQITNPTTAAAVIRLFFHDCFPNGCDASVLISSTAFNTAERDSSINLSLPGDGFDVIVRAKTALELACPNTVSCSDIISVATRDLLITVGGPYYDVFLGRRDSRTSKSSLLTDLLPLPSTPISKIIQQFESKGFTVQEMVALSGAHSIGFSHCKEFVGRVGRNNTGYNPRFAVALKKACANYPKDPTISVFNDIMTPNKFDNMYYQNLKKGLGLLESDHGLYSDPRTRYFVDLYAKNQDLFFKDFAKAMQKLSLFGIQTGRRGEIRRRCDAIN.

Positions 1–19 (MASLKSLFLLFLFFFTAQS) are cleaved as a signal peptide. 4 cysteine pairs are disulfide-bonded: C30–C111, C63–C68, C117–C312, and C196–C222. H61 acts as the Proton acceptor in catalysis. Ca(2+) contacts are provided by D62, G67, D69, and S71. A substrate-binding site is contributed by P159. H189 lines the heme b pocket. S190 contributes to the Ca(2+) binding site. N-linked (GlcNAc...) asparagine glycosylation is present at N206. The Ca(2+) site is built by D236, T239, and D244.

It belongs to the peroxidase family. Classical plant (class III) peroxidase subfamily. Heme b is required as a cofactor. Requires Ca(2+) as cofactor.

The protein localises to the secreted. It catalyses the reaction 2 a phenolic donor + H2O2 = 2 a phenolic radical donor + 2 H2O. Removal of H(2)O(2), oxidation of toxic reductants, biosynthesis and degradation of lignin, suberization, auxin catabolism, response to environmental stresses such as wounding, pathogen attack and oxidative stress. These functions might be dependent on each isozyme/isoform in each plant tissue. This Arabidopsis thaliana (Mouse-ear cress) protein is Peroxidase 31 (PER31).